A 647-amino-acid polypeptide reads, in one-letter code: Glutamyl-tRNA(Gln) amidotransferase subunit B, mitochondrial (647 aa).

The transit peptide at 1–16 directs the protein to the mitochondrion; that stretch reads MARNLCRNVQTTPRPL. The disordered stretch occupies residues 39–77; that stretch reads PRPRYFGSSTAKSAKKKSNNKAYSGSSMSAGDASAGPSR. A compositionally biased stretch (low complexity) spans 58 to 76; sequence NKAYSGSSMSAGDASAGPS.

This sequence belongs to the GatB/GatE family. GatB subfamily. Subunit of the heterotrimeric GatCAB amidotransferase (AdT) complex, composed of A, B and C subunits.

Its subcellular location is the mitochondrion. It catalyses the reaction L-glutamyl-tRNA(Gln) + L-glutamine + ATP + H2O = L-glutaminyl-tRNA(Gln) + L-glutamate + ADP + phosphate + H(+). Allows the formation of correctly charged Gln-tRNA(Gln) through the transamidation of misacylated Glu-tRNA(Gln) in the mitochondria. The reaction takes place in the presence of glutamine and ATP through an activated gamma-phospho-Glu-tRNA(Gln). The chain is Glutamyl-tRNA(Gln) amidotransferase subunit B, mitochondrial from Mycosarcoma maydis (Corn smut fungus).